The primary structure comprises 629 residues: tRNA uridine 5-carboxymethylaminomethyl modification enzyme MnmG (629 aa).

13-18 (GGGHAG) is a binding site for FAD. 273–287 (GPRYCPSIEDKIVRF) is an NAD(+) binding site.

It belongs to the MnmG family. Homodimer. Heterotetramer of two MnmE and two MnmG subunits. FAD is required as a cofactor.

The protein localises to the cytoplasm. Functionally, NAD-binding protein involved in the addition of a carboxymethylaminomethyl (cmnm) group at the wobble position (U34) of certain tRNAs, forming tRNA-cmnm(5)s(2)U34. This Pseudoalteromonas translucida (strain TAC 125) protein is tRNA uridine 5-carboxymethylaminomethyl modification enzyme MnmG.